The following is a 465-amino-acid chain: Cerebellar degeneration-related protein 2-like (465 aa).

Coiled-coil stretches lie at residues 31–64 (AAEL…HEIE), 91–142 (ARDL…LEQL), and 188–266 (LEQE…YLLA). Residues 282 to 315 (APEADDPQPGSGDDSNAQDGVSSPAASPSHAVRK) are disordered. Phosphoserine occurs at positions 308, 318, and 344. Positions 350–377 (MSILREVDEQYHALLEKYEELLSKCRQH) form a coiled coil. Positions 382–421 (RHAGVQTSRPISRDSSWRDLLGGEESPGEGKAGEKSLSQH) are disordered. At Ser-407 the chain carries Phosphoserine.

Belongs to the CDR2 family.

This chain is Cerebellar degeneration-related protein 2-like (Cdr2l), found in Mus musculus (Mouse).